Here is a 230-residue protein sequence, read N- to C-terminus: RING finger protein 141 (230 aa).

Gly2 is lipidated: N-myristoyl glycine. The RING-type zinc finger occupies 155–192; it reads CCICMDGRADLILPCAHSFCQKCIDKWSDRHRNCPICR.

It is found in the membrane. Its function is as follows. May be involved in spermatogenesis. In Pongo abelii (Sumatran orangutan), this protein is RING finger protein 141 (RNF141).